Consider the following 428-residue polypeptide: Flotillin-2 (428 aa).

Residue glycine 2 is the site of N-myristoyl glycine attachment. Residue cysteine 4 is the site of S-palmitoyl cysteine; by ZDHHC5 attachment. Cysteine 19 carries the S-palmitoyl cysteine lipid modification. Residue cysteine 20 is the site of S-palmitoyl cysteine; by ZDHHC5 attachment. Serine 405 carries the phosphoserine modification.

Belongs to the band 7/mec-2 family. Flotillin subfamily. As to quaternary structure, heterooligomeric complex of flotillin-1 and flotillin-2 and caveolin-1 and caveolin-2. Interacts with ECPAS. ZDHHC5-catalyzed palmitoylation predominantly occurs at Cys-4. ZDHHC5-catalyzed palmitoylation may be required for the formation of higher-order complexes and for neurite outgrowth in cultured neural stem cells. As to expression, in skin, expressed in epidermis and epidermal appendages but not in dermis. Expressed in all layers of the epidermis except the basal layer. In hair follicles, expressed in the suprabasal layer but not the basal layer. Also expressed in melanoma and carcinoma cell lines, fibroblasts and foreskin melanocytes.

Its subcellular location is the cell membrane. It is found in the membrane. The protein localises to the caveola. It localises to the endosome. Its function is as follows. May act as a scaffolding protein within caveolar membranes, functionally participating in formation of caveolae or caveolae-like vesicles. May be involved in epidermal cell adhesion and epidermal structure and function. The chain is Flotillin-2 (FLOT2) from Homo sapiens (Human).